Reading from the N-terminus, the 304-residue chain is UDP-3-O-acyl-N-acetylglucosamine deacetylase (304 aa).

3 residues coordinate Zn(2+): His78, His237, and Asp241. His264 functions as the Proton donor in the catalytic mechanism.

It belongs to the LpxC family. Zn(2+) serves as cofactor.

It carries out the reaction a UDP-3-O-[(3R)-3-hydroxyacyl]-N-acetyl-alpha-D-glucosamine + H2O = a UDP-3-O-[(3R)-3-hydroxyacyl]-alpha-D-glucosamine + acetate. It functions in the pathway glycolipid biosynthesis; lipid IV(A) biosynthesis; lipid IV(A) from (3R)-3-hydroxytetradecanoyl-[acyl-carrier-protein] and UDP-N-acetyl-alpha-D-glucosamine: step 2/6. Its function is as follows. Catalyzes the hydrolysis of UDP-3-O-myristoyl-N-acetylglucosamine to form UDP-3-O-myristoylglucosamine and acetate, the committed step in lipid A biosynthesis. This Legionella pneumophila (strain Lens) protein is UDP-3-O-acyl-N-acetylglucosamine deacetylase.